The following is a 283-amino-acid chain: 4-hydroxy-tetrahydrodipicolinate reductase (283 aa).

NAD(+) contacts are provided by residues 15 to 20 (GALGRM) and 116 to 118 (GTT). His172 functions as the Proton donor/acceptor in the catalytic mechanism. His173 is a binding site for (S)-2,3,4,5-tetrahydrodipicolinate. Lys176 (proton donor) is an active-site residue. 182 to 183 (GT) contacts (S)-2,3,4,5-tetrahydrodipicolinate.

It belongs to the DapB family.

It localises to the cytoplasm. It catalyses the reaction (S)-2,3,4,5-tetrahydrodipicolinate + NAD(+) + H2O = (2S,4S)-4-hydroxy-2,3,4,5-tetrahydrodipicolinate + NADH + H(+). The enzyme catalyses (S)-2,3,4,5-tetrahydrodipicolinate + NADP(+) + H2O = (2S,4S)-4-hydroxy-2,3,4,5-tetrahydrodipicolinate + NADPH + H(+). The protein operates within amino-acid biosynthesis; L-lysine biosynthesis via DAP pathway; (S)-tetrahydrodipicolinate from L-aspartate: step 4/4. Functionally, catalyzes the conversion of 4-hydroxy-tetrahydrodipicolinate (HTPA) to tetrahydrodipicolinate. This chain is 4-hydroxy-tetrahydrodipicolinate reductase, found in Prochlorococcus marinus (strain MIT 9313).